The sequence spans 37 residues: Large ribosomal subunit protein bL36 (37 aa).

This sequence belongs to the bacterial ribosomal protein bL36 family.

The sequence is that of Large ribosomal subunit protein bL36 from Shewanella frigidimarina (strain NCIMB 400).